The sequence spans 368 residues: Germination protease (368 aa).

Residues 1–16 (MKNNELDVNQFLIRTD) constitute a propeptide that is removed on maturation.

Belongs to the peptidase A25 family. As to quaternary structure, homotetramer. Post-translationally, autoproteolytically processed. The inactive tetrameric zymogen termed p46 autoprocesses to a smaller form termed p41, which is active only during spore germination.

The enzyme catalyses Endopeptidase action with P4 Glu or Asp, P1 preferably Glu &gt; Asp, P1' hydrophobic and P2' Ala.. In terms of biological role, initiates the rapid degradation of small, acid-soluble proteins during spore germination. The sequence is that of Germination protease from Bacillus velezensis (strain DSM 23117 / BGSC 10A6 / LMG 26770 / FZB42) (Bacillus amyloliquefaciens subsp. plantarum).